Here is a 296-residue protein sequence, read N- to C-terminus: MSSQAFRTGFVAIVGRPNVGKSTLTNALIGSKISIVSRKAQTTRHRIHGVLTREHEQFVFVDTPGFQTRHGGAMNRMMNRVVTQALADVDVVVHVVEAGKWSEGDAKLLPLLPKAERTILAISKIDALKSRDELFPFVAKIMAQHAYGAVVPVSATKNHQLDQLLEEIAQRLPEGEPMFEEDTLTDRSMRFIAAELVREKIFRLVGDELPYGCTVVIEQWEETDAHARIAACVVVERDSHRPILLGAGGQHMKRIATEARQDIAKLLDKPVHLEVYIKVRKGWSDREGALRDLGYE.

Positions 7–174 (RTGFVAIVGR…LEEIAQRLPE (168 aa)) constitute an Era-type G domain. A G1 region spans residues 15-22 (GRPNVGKS). GTP is bound at residue 15-22 (GRPNVGKS). Positions 41–45 (QTTRH) are G2. The interval 62-65 (DTPG) is G3. GTP is bound by residues 62-66 (DTPGF) and 123-126 (SKID). The tract at residues 123-126 (SKID) is G4. Residues 153–155 (VSA) form a G5 region. The KH type-2 domain occupies 197–281 (VREKIFRLVG…HLEVYIKVRK (85 aa)).

It belongs to the TRAFAC class TrmE-Era-EngA-EngB-Septin-like GTPase superfamily. Era GTPase family. Monomer.

The protein resides in the cytoplasm. It is found in the cell inner membrane. Its function is as follows. An essential GTPase that binds both GDP and GTP, with rapid nucleotide exchange. Plays a role in 16S rRNA processing and 30S ribosomal subunit biogenesis and possibly also in cell cycle regulation and energy metabolism. This chain is GTPase Era, found in Bordetella avium (strain 197N).